The sequence spans 95 residues: Protein TusB (95 aa).

Belongs to the DsrH/TusB family. As to quaternary structure, heterohexamer, formed by a dimer of trimers. The hexameric TusBCD complex contains 2 copies each of TusB, TusC and TusD. The TusBCD complex interacts with TusE.

Its subcellular location is the cytoplasm. Part of a sulfur-relay system required for 2-thiolation of 5-methylaminomethyl-2-thiouridine (mnm(5)s(2)U) at tRNA wobble positions. The polypeptide is Protein TusB (Shigella sonnei (strain Ss046)).